Consider the following 205-residue polypeptide: ATP-dependent Clp protease proteolytic subunit 2 (205 aa).

Catalysis depends on Ser-100, which acts as the Nucleophile. Residue His-125 is part of the active site.

Belongs to the peptidase S14 family. As to quaternary structure, fourteen ClpP subunits assemble into 2 heptameric rings which stack back to back to give a disk-like structure with a central cavity, resembling the structure of eukaryotic proteasomes.

The protein resides in the cytoplasm. The enzyme catalyses Hydrolysis of proteins to small peptides in the presence of ATP and magnesium. alpha-casein is the usual test substrate. In the absence of ATP, only oligopeptides shorter than five residues are hydrolyzed (such as succinyl-Leu-Tyr-|-NHMec, and Leu-Tyr-Leu-|-Tyr-Trp, in which cleavage of the -Tyr-|-Leu- and -Tyr-|-Trp bonds also occurs).. Its function is as follows. Cleaves peptides in various proteins in a process that requires ATP hydrolysis. Has a chymotrypsin-like activity. Plays a major role in the degradation of misfolded proteins. This is ATP-dependent Clp protease proteolytic subunit 2 from Chlamydia abortus (strain DSM 27085 / S26/3) (Chlamydophila abortus).